Consider the following 509-residue polypeptide: Maturase K (509 aa).

It belongs to the intron maturase 2 family. MatK subfamily.

It localises to the plastid. The protein localises to the chloroplast. Usually encoded in the trnK tRNA gene intron. Probably assists in splicing its own and other chloroplast group II introns. This chain is Maturase K, found in Solanum lycopersicum (Tomato).